A 434-amino-acid chain; its full sequence is GPI-anchor transamidase component PIGU (434 aa).

Topologically, residues 1–3 (MAA) are cytoplasmic. The helical transmembrane segment at 4-22 (PLALVLVVAVTVRAALFRS) threads the bilayer. At 23-78 (SLAEFISERVEVVSPLSSWKRVVEGLALLDLGVSPYSGAVFHETPLIIYLFHFLID) the chain is on the lumenal side. A helical membrane pass occupies residues 79 to 99 (YAELVFMITDALTAIALYFAI). Topologically, residues 100–136 (QDFNKVVFKKQKLLLELDQYAPDVAELIRTPMEMRYI) are cytoplasmic. The next 4 membrane-spanning stretches (helical) occupy residues 137 to 157 (PLKVALYLLNPYTILSCVAKS), 158 to 177 (TCAINNTLIAFFILTTIKGS), 178 to 193 (VFLSAVFLALATYQSL), and 194 to 204 (YPVTLFAPGLL). Residues 205-221 (YLLQRQYIPVKVKSKAF) are Cytoplasmic-facing. Position 215 (lysine 215) interacts with a cardiolipin. A helical membrane pass occupies residues 222–243 (WIFSWEYAMMYTGSLVVIVCLS). The Lumenal segment spans residues 244 to 285 (FFLLSSWDFIPAVYGFILSVPDLTPNIGLFWYFFAEMFEHFS). The helical transmembrane segment at 286–305 (LFFVCVFQINVFFYTVPLAI) threads the bilayer. Over 306–310 (KLKEH) the chain is Cytoplasmic. Position 308 (lysine 308) interacts with a cardiolipin. Helical transmembrane passes span 311-330 (PIFFMFIQIAIISIFKSYPT) and 331-344 (VGDVALYMAFFPVW). Over 345 to 353 (NHLYRFLRN) the chain is Cytoplasmic. Residues 354–371 (IFVLTCIIIVCSLLFPVL) form a helical membrane-spanning segment. Residues 372–383 (WHLWIYAGSANS) lie on the Lumenal side of the membrane. Asparagine 382 and asparagine 384 together coordinate a 2-acyl-6-[6-phosphoethanolamine-alpha-D-mannosyl-(1-&gt;2)-6-phosphoethanolamine-alpha-D-mannosyl-(1-&gt;6)-2-phosphoethanolamine-alpha-D-mannosyl-(1-&gt;4)-alpha-D-glucosaminyl]-1-(1-radyl,2-acyl-sn-glycero-3-phospho)-1D-myo-inositol. The helical transmembrane segment at 384–405 (NFFYAITLTFNVGQILLISDYF) threads the bilayer. Residues 406–434 (YAFLRREYYLTHGLYLTAKDGTEAMLVLK) are Cytoplasmic-facing.

Belongs to the PIGU family. Heteropentamer. Part of the GPI-anchor transamidase complex, consisting of PIGK, PIGT, PIGS, PIGU and GAA1.

Its subcellular location is the endoplasmic reticulum membrane. Its pathway is glycolipid biosynthesis; glycosylphosphatidylinositol-anchor biosynthesis. Component of the glycosylphosphatidylinositol-anchor (GPI-anchor) transamidase (GPI-T) complex that catalyzes the formation of the linkage between a proprotein and a GPI-anchor and participates in GPI anchored protein biosynthesis. Binds the lipid portion of GPI-anchor. May act as an organizer in the transmembrane layer to recruit other subunits, and thus is essential for assembly of the complex. In Mus musculus (Mouse), this protein is GPI-anchor transamidase component PIGU.